A 216-amino-acid polypeptide reads, in one-letter code: Adenylate kinase (216 aa).

Glycine 10–threonine 15 serves as a coordination point for ATP. The interval serine 30–valine 59 is NMP. AMP-binding positions include threonine 31, arginine 36, glutamine 57 to valine 59, glycine 85 to arginine 88, and glutamine 92. The segment at glycine 126–aspartate 163 is LID. Arginine 127 serves as a coordination point for ATP. Cysteine 130 and cysteine 133 together coordinate Zn(2+). Serine 136–tyrosine 137 contacts ATP. Cysteine 150 and cysteine 153 together coordinate Zn(2+). AMP is bound by residues arginine 160 and arginine 171. Lysine 199 serves as a coordination point for ATP.

Belongs to the adenylate kinase family. As to quaternary structure, monomer.

Its subcellular location is the cytoplasm. It catalyses the reaction AMP + ATP = 2 ADP. It participates in purine metabolism; AMP biosynthesis via salvage pathway; AMP from ADP: step 1/1. Catalyzes the reversible transfer of the terminal phosphate group between ATP and AMP. Plays an important role in cellular energy homeostasis and in adenine nucleotide metabolism. This Clostridium beijerinckii (strain ATCC 51743 / NCIMB 8052) (Clostridium acetobutylicum) protein is Adenylate kinase.